Here is a 631-residue protein sequence, read N- to C-terminus: Phosphomethylpyrimidine synthase (631 aa).

Residues Asn-239, Met-268, Tyr-297, His-333, Ser-353–Gly-355, Asp-394–Arg-397, and Glu-433 contribute to the substrate site. Zn(2+) is bound at residue His-437. Tyr-460 is a substrate binding site. Residue His-501 participates in Zn(2+) binding. [4Fe-4S] cluster-binding residues include Cys-581, Cys-584, and Cys-589.

It belongs to the ThiC family. Homodimer. The cofactor is [4Fe-4S] cluster.

The enzyme catalyses 5-amino-1-(5-phospho-beta-D-ribosyl)imidazole + S-adenosyl-L-methionine = 4-amino-2-methyl-5-(phosphooxymethyl)pyrimidine + CO + 5'-deoxyadenosine + formate + L-methionine + 3 H(+). Its pathway is cofactor biosynthesis; thiamine diphosphate biosynthesis. Catalyzes the synthesis of the hydroxymethylpyrimidine phosphate (HMP-P) moiety of thiamine from aminoimidazole ribotide (AIR) in a radical S-adenosyl-L-methionine (SAM)-dependent reaction. The protein is Phosphomethylpyrimidine synthase of Escherichia coli (strain SMS-3-5 / SECEC).